A 250-amino-acid polypeptide reads, in one-letter code: MAMSKIATLAGLLASAGLVAGHGYVTKMTIDGEEYGGWLADSYYYMDSPPDNYGWSTTVTDNGFVSPDAFGTDDITCHRGATPGALSAPVTAGSKIDITWNTWPESHKDNQGPIINYLAKCNGDCSSADKTSLEFVKIQAEAIVDASTNTWVTDELIENSFTTSVTIPASIAPGNYVLRHEIIALHSAGQQNGAQAYPQCLNLVVSGSGTDNPSGTPGTQLYSANDEGIVFDIYSNPTSYPMPGPELYSG.

An N-terminal signal peptide occupies residues 1–21 (MAMSKIATLAGLLASAGLVAG). H22 lines the Cu(2+) pocket. D51 contributes to the O2 binding site. 2 disulfides stabilise this stretch: C77–C200 and C121–C125. H107 contacts Cu(2+). Residues H186 and Q195 each coordinate O2. Y197 contributes to the Cu(2+) binding site.

It belongs to the glycosyl hydrolase 61 family. Cu(2+) serves as cofactor.

Its subcellular location is the secreted. The catalysed reaction is Endohydrolysis of (1-&gt;4)-beta-D-glucosidic linkages in cellulose, lichenin and cereal beta-D-glucans.. Lytic polysaccharide monooxygenase (LMPO) that depolymerizes crystalline and amorphous polysaccharides via the oxidation of scissile alpha- or beta-(1-4)-glycosidic bonds, yielding C1 or C4 oxidation products. Catalysis by LPMOs requires the reduction of the active-site copper from Cu(II) to Cu(I) by a reducing agent and H(2)O(2) or O(2) as a cosubstrate. Major secreted component of the extracellular cellulolytic system. The protein is AA9 family lytic polysaccharide monooxygenase F of Emericella nidulans (strain FGSC A4 / ATCC 38163 / CBS 112.46 / NRRL 194 / M139) (Aspergillus nidulans).